The sequence spans 316 residues: Transcription initiation factor IIB (316 aa).

The TFIIB-type zinc finger occupies 11–42 (PRVTCPNHPDAILVEDYRAGDMICPECGLVVG). Positions 15, 18, 34, and 37 each coordinate Zn(2+). Serine 70, serine 76, and serine 92 each carry phosphoserine. 2 tandem repeats follow at residues 124-200 (MADR…LILK) and 218-294 (FCSN…LIYP). Lysine 152, arginine 154, lysine 189, and lysine 196 together coordinate DNA. The core promoter DNA-binding stretch occupies residues 189-193 (KEIGR). N6-acetyllysine; by autocatalysis is present on lysine 238. The segment at 244 to 316 (LVPGRSPISV…DTPVDKLPQL (73 aa)) is necessary for TATA box-bound TBP complex formation. DNA is bound at residue arginine 248. The interval 249-252 (SPIS) is core promoter DNA-binding. DNA contacts are provided by lysine 272, alanine 281, threonine 284, arginine 286, and arginine 290. Positions 283-286 (VTIR) are core promoter DNA-binding.

This sequence belongs to the TFIIB family. Found in a ternary complex with TATA box-bound TBP. Part of a TFIID-containing RNA polymerase II pre-initiation complex (PIC) that is composed of TBP and at least GTF2A1, GTF2A2, GTF2E1, GTF2E2, GTF2F1, GTF2H2, GTF2H3, GTF2H4, GTF2H5, GTF2B, TCEA1, ERCC2, ERCC3, TAF1, TAF2, TAF3, TAF4, TAF5, TAF6, TAF7, TAF8, TAF9, TAF10, TAF11, TAF12 and TAF13. Associates with TFIID-TFIIA (DA complex) to form TFIID-TFIIA-TFIIB (DAB complex), which is then recognized by RNA polymerase II (Pol II). Found in a RNA polymerase II initiation complex. Interacts (via C-terminus) with TBP; this interaction with TATA box-bound TBP guides Pol II into the PIC. Interacts (via N-terminus) with Pol II. Interacts (via C-terminus) with SSU72; this interaction is inhibited by SYMPK. Interacts with NR2F1; this interaction is direct. Interacts with PGR. Interacts with ESR1. Interacts with GTF2F1 (via C-terminus and preferentially via acetylated form); this interaction prevents binding of GTF2B to GTF2F2. Interacts with GTF2F2 (via N-terminus); this interaction is inhibited in presence of GTF2F1. Interacts with the transcription elongation factor TCEA2. Interacts with HSF1 (via transactivation domain). Interacts with GPBP1. Acetylated. Autoacetylated; autoacetylation at Lys-238 stimulates transcription activation.

The protein localises to the nucleus. It is found in the chromosome. The enzyme catalyses L-lysyl-[protein] + acetyl-CoA = N(6)-acetyl-L-lysyl-[protein] + CoA + H(+). Its function is as follows. General transcription factor that plays a role in transcription initiation by RNA polymerase II (Pol II). Involved in the pre-initiation complex (PIC) formation and Pol II recruitment at promoter DNA. Together with the TATA box-bound TBP forms the core initiation complex and provides a bridge between TBP and the Pol II-TFIIF complex. Released from the PIC early following the onset of transcription during the initiation and elongation transition and reassociates with TBP during the next transcription cycle. Associates with chromatin to core promoter-specific regions. Binds to two distinct DNA core promoter consensus sequence elements in a TBP-independent manner; these IIB-recognition elements (BREs) are localized immediately upstream (BREu), 5'-[GC][GC][GA]CGCC-3', and downstream (BREd), 5'-[GA]T[TGA][TG][GT][TG][TG]-3', of the TATA box element. Modulates transcription start site selection. Also exhibits autoacetyltransferase activity that contributes to the activated transcription. The polypeptide is Transcription initiation factor IIB (Mus musculus (Mouse)).